The chain runs to 463 residues: MENSLKSSGKPLAAPKVGMVSLGCPKALVDSEQIITQLRAEGYEISGTYDGADLVVVNTCGFIDEAVQESLDAIGEALAENGKVIVTGCLGAKKSASGSGLIAEVHPKVLAVTGPHAVGEVMQAVHSHLPKPHDPFVDLVPAAGIKLTPRHYAYLKISEGCNHRCSFCIIPSMRGELVSRPVAEVMLEAENLFKSGVKELLVISQDTSAYGVDVKYRTGFWNGRPLKTRMTELVGALGELAAQYGAWVRLHYVYPYPHVDEIIPMMAQGPLKGHVLPYLDVPFQHAHPEVLKRMKRPANAERVLERVQKWREICPDLTIRSTFIAGFPGETDAQFETLLDFIRDAELDRVGCFAYSPVEGASANALDGALPDDVREARRARFMEVAEEVSAARIARKIGKTLKVLIDEVNAEGGIGRTAADAPEIDGVVYVEPAAKASKRYKVGEFVSVKITGADSHDLWGEV.

An MTTase N-terminal domain is found at P15–P130. Residues C24, C60, C89, C161, C165, and C168 each coordinate [4Fe-4S] cluster. The region spanning L147–A392 is the Radical SAM core domain. Residues A395 to V463 form the TRAM domain.

Belongs to the methylthiotransferase family. RimO subfamily. The cofactor is [4Fe-4S] cluster.

It is found in the cytoplasm. The enzyme catalyses L-aspartate(89)-[ribosomal protein uS12]-hydrogen + (sulfur carrier)-SH + AH2 + 2 S-adenosyl-L-methionine = 3-methylsulfanyl-L-aspartate(89)-[ribosomal protein uS12]-hydrogen + (sulfur carrier)-H + 5'-deoxyadenosine + L-methionine + A + S-adenosyl-L-homocysteine + 2 H(+). Its function is as follows. Catalyzes the methylthiolation of an aspartic acid residue of ribosomal protein uS12. The sequence is that of Ribosomal protein uS12 methylthiotransferase RimO from Burkholderia pseudomallei (strain 668).